The chain runs to 273 residues: NH(3)-dependent NAD(+) synthetase (273 aa).

45-52 (GISGGQDS) contacts ATP. Asp51 lines the Mg(2+) pocket. Residue Arg139 participates in deamido-NAD(+) binding. Thr159 contributes to the ATP binding site. A Mg(2+)-binding site is contributed by Glu164. Residues Lys172 and Asp179 each contribute to the deamido-NAD(+) site. Residues Lys188 and Thr210 each contribute to the ATP site. Residue 259–260 (HK) coordinates deamido-NAD(+).

The protein belongs to the NAD synthetase family. As to quaternary structure, homodimer.

It carries out the reaction deamido-NAD(+) + NH4(+) + ATP = AMP + diphosphate + NAD(+) + H(+). Its pathway is cofactor biosynthesis; NAD(+) biosynthesis; NAD(+) from deamido-NAD(+) (ammonia route): step 1/1. Catalyzes the ATP-dependent amidation of deamido-NAD to form NAD. Uses ammonia as a nitrogen source. The protein is NH(3)-dependent NAD(+) synthetase of Bacillus pumilus (strain SAFR-032).